Consider the following 138-residue polypeptide: Translation initiation factor 5A (138 aa).

At K37 the chain carries Hypusine.

Belongs to the eIF-5A family.

It is found in the cytoplasm. Functions by promoting the formation of the first peptide bond. This Pyrococcus horikoshii (strain ATCC 700860 / DSM 12428 / JCM 9974 / NBRC 100139 / OT-3) protein is Translation initiation factor 5A (eif5a).